Here is an 886-residue protein sequence, read N- to C-terminus: Alanine--tRNA ligase (886 aa).

4 residues coordinate Zn(2+): H564, H568, C676, and H680.

Belongs to the class-II aminoacyl-tRNA synthetase family. Zn(2+) is required as a cofactor.

The protein resides in the cytoplasm. The enzyme catalyses tRNA(Ala) + L-alanine + ATP = L-alanyl-tRNA(Ala) + AMP + diphosphate. Catalyzes the attachment of alanine to tRNA(Ala) in a two-step reaction: alanine is first activated by ATP to form Ala-AMP and then transferred to the acceptor end of tRNA(Ala). Also edits incorrectly charged Ser-tRNA(Ala) and Gly-tRNA(Ala) via its editing domain. This is Alanine--tRNA ligase from Methylobacterium sp. (strain 4-46).